Consider the following 122-residue polypeptide: Small ribosomal subunit protein uS13 (122 aa).

Residues 97–122 (PCRGQRTKTNARTRKGPARTVAGKKK) form a disordered region.

It belongs to the universal ribosomal protein uS13 family. As to quaternary structure, part of the 30S ribosomal subunit. Forms a loose heterodimer with protein S19. Forms two bridges to the 50S subunit in the 70S ribosome.

In terms of biological role, located at the top of the head of the 30S subunit, it contacts several helices of the 16S rRNA. In the 70S ribosome it contacts the 23S rRNA (bridge B1a) and protein L5 of the 50S subunit (bridge B1b), connecting the 2 subunits; these bridges are implicated in subunit movement. Contacts the tRNAs in the A and P-sites. The protein is Small ribosomal subunit protein uS13 of Geobacter sp. (strain M21).